The chain runs to 189 residues: Mu-like prophage FluMu protein gp27 (189 aa).

The protein to phage Mu protein gp27.

In Haemophilus influenzae (strain ATCC 51907 / DSM 11121 / KW20 / Rd), this protein is Mu-like prophage FluMu protein gp27.